Here is an 883-residue protein sequence, read N- to C-terminus: Phosphoenolpyruvate carboxylase (883 aa).

Residues His138 and Lys546 contribute to the active site.

The protein belongs to the PEPCase type 1 family. The cofactor is Mg(2+).

The catalysed reaction is oxaloacetate + phosphate = phosphoenolpyruvate + hydrogencarbonate. In terms of biological role, forms oxaloacetate, a four-carbon dicarboxylic acid source for the tricarboxylic acid cycle. This Escherichia coli O127:H6 (strain E2348/69 / EPEC) protein is Phosphoenolpyruvate carboxylase.